A 1108-amino-acid polypeptide reads, in one-letter code: Eukaryotic translation initiation factor 2-alpha kinase 3 (1108 aa).

An N-terminal signal peptide occupies residues 1–27; it reads MERATQPRPRALLLLFLLLGCAAGISA. At 28 to 506 the chain is on the lumenal side; that stretch reads VARARSLLAP…HYSKNIRKKD (479 aa). The disordered stretch occupies residues 71–92; that stretch reads EALPAASGEQESRATESDDDVE. The N-linked (GlcNAc...) asparagine glycan is linked to asparagine 253. A helical transmembrane segment spans residues 507 to 527; it reads PILLLHWWKEIFGTILLCIVA. At 528–1108 the chain is on the cytoplasmic side; that stretch reads TTFIVRRLFH…SSTFSPLPGN (581 aa). The interval 542 to 563 is disordered; it reads RQRKESETQCQTESKYDSVSAD. The Protein kinase domain maps to 585–1069; sequence FEPIQCMGRG…ATDIIENAVF (485 aa). 591–599 serves as a coordination point for ATP; sequence MGRGGFGVV. Residue tyrosine 611 is modified to Phosphotyrosine; by autocatalysis. An ATP-binding site is contributed by lysine 614. The insert loop stretch occupies residues 639–880; it reads EHPGIVRYFN…SPKVYLYIQM (242 aa). Phosphoserine is present on serine 707. Disordered regions lie at residues 772 to 818 and 832 to 856; these read DEGH…RMNR and FKHSSSRSSSEATLSTSPTRPTTLS. Over residues 785–798 the composition is skewed to polar residues; it reads SPYTRSREGTSSSI. A Phosphothreonine modification is found at threonine 794. The span at 837–856 shows a compositional bias: low complexity; sequence SRSSSEATLSTSPTRPTTLS. Residue aspartate 929 is the Proton acceptor of the active site. Threonine 974 is modified (phosphothreonine). The disordered stretch occupies residues 1080–1108; it reads LRQRSRSLSSSGTKHSRQPSSTFSPLPGN. Serine 1086 is subject to Phosphoserine. Polar residues predominate over residues 1097–1108; it reads QPSSTFSPLPGN.

This sequence belongs to the protein kinase superfamily. Ser/Thr protein kinase family. GCN2 subfamily. As to quaternary structure, forms dimers with HSPA5/BIP in resting cells. Homotetramerizes in response to endoplasmic reticulum (ER) stress, leading to its activation. Interacts with HSP90B1/GRP94. Interacts with DNAJC3; inhibiting EIF2AK3/PERK activity. Interacts with ATAD3A; ATAD3A and EIF2S1/eIF-2-alpha occupy a common binding site within the cytoplasmic loop of EIF2AK3/PERK, leading to prevent EIF2AK3/PERK association with its substrate EIF2S1/eIF-2-alpha. Interacts with MFN2. Interacts with TMEM33. Interacts with PDIA6. Interacts with LACC1. Post-translationally, oligomerization of the N-terminal ER luminal domain by ER stress promotes EIF2AK3/PERK trans-autophosphorylation of the C-terminal cytoplasmic kinase domain at multiple residues including Thr-974 on the kinase activation loop. Autophosphorylated at Tyr-611 following endoplasmic reticulum stress, leading to activate its activity. Dephosphorylated at Tyr-611 by PTPN1/PTP1B, leading to inactivate its enzyme activity. Phosphorylation at Thr-794 by AKT (AKT1, AKT2 and/or AKT3) inactivates EIF2AK3/PERK. In terms of processing, ADP-ribosylated by PARP16 upon ER stress, which increases kinase activity. As to expression, ubiquitous.

The protein localises to the endoplasmic reticulum membrane. It carries out the reaction L-seryl-[protein] + ATP = O-phospho-L-seryl-[protein] + ADP + H(+). It catalyses the reaction L-threonyl-[protein] + ATP = O-phospho-L-threonyl-[protein] + ADP + H(+). The catalysed reaction is L-tyrosyl-[protein] + ATP = O-phospho-L-tyrosyl-[protein] + ADP + H(+). Inhibited by HSPA5/BIP in absence of stress. Perturbation in protein folding in the endoplasmic reticulum (ER) promotes reversible dissociation from HSPA5/BIP and oligomerization, resulting in trans-autophosphorylation and kinase activity induction. Inactivated following phosphorylation at Thr-794 by AKT (AKT1, AKT2 and/or AKT3). Inhibited by ATAD3A at mitochondria-endoplasmic reticulum contact sites, providing a safe haven for mitochondrial protein translation during ER stress. Functionally, metabolic-stress sensing protein kinase that phosphorylates the alpha subunit of eukaryotic translation initiation factor 2 (EIF2S1/eIF-2-alpha) in response to various stress, such as unfolded protein response (UPR). Key effector of the integrated stress response (ISR) to unfolded proteins: EIF2AK3/PERK specifically recognizes and binds misfolded proteins, leading to its activation and EIF2S1/eIF-2-alpha phosphorylation. EIF2S1/eIF-2-alpha phosphorylation in response to stress converts EIF2S1/eIF-2-alpha in a global protein synthesis inhibitor, leading to a global attenuation of cap-dependent translation, while concomitantly initiating the preferential translation of ISR-specific mRNAs, such as the transcriptional activators ATF4 and QRICH1, and hence allowing ATF4- and QRICH1-mediated reprogramming. The EIF2AK3/PERK-mediated unfolded protein response increases mitochondrial oxidative phosphorylation by promoting ATF4-mediated expression of COX7A2L/SCAF1, thereby increasing formation of respiratory chain supercomplexes. In contrast to most subcellular compartments, mitochondria are protected from the EIF2AK3/PERK-mediated unfolded protein response due to EIF2AK3/PERK inhibition by ATAD3A at mitochondria-endoplasmic reticulum contact sites. In addition to EIF2S1/eIF-2-alpha, also phosphorylates NFE2L2/NRF2 in response to stress, promoting release of NFE2L2/NRF2 from the BCR(KEAP1) complex, leading to nuclear accumulation and activation of NFE2L2/NRF2. Serves as a critical effector of unfolded protein response (UPR)-induced G1 growth arrest due to the loss of cyclin-D1 (CCND1). Involved in control of mitochondrial morphology and function. The polypeptide is Eukaryotic translation initiation factor 2-alpha kinase 3 (Eif2ak3) (Rattus norvegicus (Rat)).